Here is a 97-residue protein sequence, read N- to C-terminus: Large ribosomal subunit protein bL28 (97 aa).

The protein belongs to the bacterial ribosomal protein bL28 family.

The chain is Large ribosomal subunit protein bL28 from Rhizorhabdus wittichii (strain DSM 6014 / CCUG 31198 / JCM 15750 / NBRC 105917 / EY 4224 / RW1) (Sphingomonas wittichii).